Consider the following 677-residue polypeptide: DNA ligase (677 aa).

NAD(+) contacts are provided by residues 32-36 (DAQYD), 81-82 (SL), and Glu-112. The N6-AMP-lysine intermediate role is filled by Lys-114. Positions 135, 171, 288, and 312 each coordinate NAD(+). Positions 416, 419, 434, and 439 each coordinate Zn(2+). The 80-residue stretch at 598 to 677 (NKNMPFSGME…REFINMLEQS (80 aa)) folds into the BRCT domain.

This sequence belongs to the NAD-dependent DNA ligase family. LigA subfamily. Mg(2+) serves as cofactor. The cofactor is Mn(2+).

The enzyme catalyses NAD(+) + (deoxyribonucleotide)n-3'-hydroxyl + 5'-phospho-(deoxyribonucleotide)m = (deoxyribonucleotide)n+m + AMP + beta-nicotinamide D-nucleotide.. In terms of biological role, DNA ligase that catalyzes the formation of phosphodiester linkages between 5'-phosphoryl and 3'-hydroxyl groups in double-stranded DNA using NAD as a coenzyme and as the energy source for the reaction. It is essential for DNA replication and repair of damaged DNA. In Dehalococcoides mccartyi (strain CBDB1), this protein is DNA ligase.